Consider the following 249-residue polypeptide: Triosephosphate isomerase (249 aa).

Asparagine 12 and lysine 14 together coordinate substrate. N6-acetyllysine is present on lysine 14. Tyrosine 68 is modified (3'-nitrotyrosine). Phosphoserine is present on serine 80. The active-site Electrophile is histidine 96. Serine 106 is modified (phosphoserine). Lysine 142 participates in a covalent cross-link: Glycyl lysine isopeptide (Lys-Gly) (interchain with G-Cter in SUMO1). Lysine 149 bears the N6-succinyllysine mark. Lysine 156 bears the N6-acetyllysine; alternate mark. Lysine 156 carries the post-translational modification N6-succinyllysine; alternate. Serine 159 bears the Phosphoserine mark. The active-site Proton acceptor is glutamate 166. At threonine 173 the chain carries Phosphothreonine. Lysine 194 carries the N6-acetyllysine; alternate modification. Lysine 194 carries the post-translational modification N6-succinyllysine; alternate. Position 194 is an N6-methyllysine; alternate (lysine 194). Serine 198 carries the phosphoserine modification. Tyrosine 209 bears the 3'-nitrotyrosine mark. A Phosphoserine modification is found at serine 212. A Phosphothreonine modification is found at threonine 214. Serine 223 carries the post-translational modification Phosphoserine. Lysine 238 is subject to N6-acetyllysine.

Belongs to the triosephosphate isomerase family. Homodimer.

Its subcellular location is the cytoplasm. It catalyses the reaction dihydroxyacetone phosphate = methylglyoxal + phosphate. The enzyme catalyses D-glyceraldehyde 3-phosphate = dihydroxyacetone phosphate. Its pathway is carbohydrate degradation; glycolysis; D-glyceraldehyde 3-phosphate from glycerone phosphate: step 1/1. It participates in carbohydrate biosynthesis; gluconeogenesis. Triosephosphate isomerase is an extremely efficient metabolic enzyme that catalyzes the interconversion between dihydroxyacetone phosphate (DHAP) and D-glyceraldehyde-3-phosphate (G3P) in glycolysis and gluconeogenesis. In terms of biological role, it is also responsible for the non-negligible production of methylglyoxal a reactive cytotoxic side-product that modifies and can alter proteins, DNA and lipids. The protein is Triosephosphate isomerase (TPI1) of Canis lupus familiaris (Dog).